The chain runs to 327 residues: Acetyl-coenzyme A carboxylase carboxyl transferase subunit beta (327 aa).

Residues 24-293 (LWIKCPDTGQ…LTVTTAVEAP (270 aa)) enclose the CoA carboxyltransferase N-terminal domain. The span at 293 to 311 (PAEAAAKAEPEATTTEQPG) shows a compositional bias: low complexity. Positions 293-327 (PAEAAAKAEPEATTTEQPGAPAPTEPPAQPAAPQA) are disordered. Pro residues predominate over residues 312–327 (APAPTEPPAQPAAPQA).

It belongs to the AccD/PCCB family. As to quaternary structure, acetyl-CoA carboxylase is a heterohexamer composed of biotin carboxyl carrier protein (AccB), biotin carboxylase (AccC) and two subunits each of ACCase subunit alpha (AccA) and ACCase subunit beta (AccD).

The protein localises to the cytoplasm. It carries out the reaction N(6)-carboxybiotinyl-L-lysyl-[protein] + acetyl-CoA = N(6)-biotinyl-L-lysyl-[protein] + malonyl-CoA. The protein operates within lipid metabolism; malonyl-CoA biosynthesis; malonyl-CoA from acetyl-CoA: step 1/1. Component of the acetyl coenzyme A carboxylase (ACC) complex. Biotin carboxylase (BC) catalyzes the carboxylation of biotin on its carrier protein (BCCP) and then the CO(2) group is transferred by the transcarboxylase to acetyl-CoA to form malonyl-CoA. This is Acetyl-coenzyme A carboxylase carboxyl transferase subunit beta from Rhodopseudomonas palustris (strain ATCC BAA-98 / CGA009).